The sequence spans 475 residues: Mitochondrial adenyl nucleotide antiporter SLC25A24 (475 aa).

Positions 1–173 are regulatory N-terminal domain; it reads MLRWLRAFVL…RFWKHSTGID (173 aa). Residues 1-197 lie on the Mitochondrial intermembrane side of the membrane; the sequence is MLRWLRAFVL…EKKSGQWWRQ (197 aa). EF-hand domains are found at residues 19-54, 55-88, 86-121, and 122-157; these read EPPT…LGIP, LGQD…KDHE, DHEK…LGLH, and ISEK…NPVT. Residues Asp-32, Asn-34, Asp-36, Val-38, Glu-43, Asp-68, Asn-70, Asp-72, Lys-74, Glu-79, Asp-99, Asn-101, Asp-103, Lys-105, Glu-110, Asp-135, Asp-137, Thr-139, Thr-141, and Glu-146 each contribute to the Ca(2+) site. The segment at 159-168 is linker region; it reads IEEIIRFWKH. The segment at 174-475 is C-terminal transmembrane transporter domain; that stretch reads IGDSLTIPDE…MKQTLGVAQK (302 aa). Solcar repeat units follow at residues 192–276, 284–369, and 381–469; these read GQWW…YKKL, LGTF…LKSY, and PGVM…MKQT. A helical transmembrane segment spans residues 198 to 215; sequence LLAGGVAGAVSRTSTAPL. Residues 216-250 lie on the Mitochondrial matrix side of the membrane; the sequence is DRLKVMMQVHGSKSMNIFGGFRQMVKEGGIRSLWR. A helical membrane pass occupies residues 251-270; the sequence is GNGTNVIKIAPETAVKFWAY. The Mitochondrial intermembrane portion of the chain corresponds to 271–293; it reads EQYKKLLTEEGQKLGTFERFISG. Residues 294–307 traverse the membrane as a helical segment; the sequence is SMAGATAQTFIYPM. Residues 308–343 are Mitochondrial matrix-facing; sequence EVLKTRLAVAKTGQYSGIYGCAKKILKHEGFGAFYK. Lys-318 is subject to N6-acetyllysine; alternate. Lys-318 is modified (N6-succinyllysine; alternate). Residue Lys-334 is modified to N6-acetyllysine. A helical membrane pass occupies residues 344–363; sequence GYIPNLLGIIPYAGIDLAVY. The Mitochondrial intermembrane segment spans residues 364–386; the sequence is ELLKSYWLDNFAKDSVNPGVMVL. Residues 387–404 form a helical membrane-spanning segment; sequence LSCGALSSTCGQLASYPL. The Mitochondrial matrix segment spans residues 405-443; it reads ALVRTRMQAQATVEGAPQLSMVGLFQRIVSKEGVSGLYR. Lys-435 bears the N6-acetyllysine; alternate mark. The residue at position 435 (Lys-435) is an N6-succinyllysine; alternate. Residues 444–463 traverse the membrane as a helical segment; the sequence is GITPNFMKVLPAVGISYVVY. The Mitochondrial intermembrane segment spans residues 464-475; the sequence is ENMKQTLGVAQK.

Belongs to the mitochondrial carrier (TC 2.A.29) family. In terms of assembly, monomer.

The protein resides in the mitochondrion inner membrane. The catalysed reaction is Mg(2+)(out) + phosphate(in) + ATP(out) = Mg(2+)(in) + phosphate(out) + ATP(in). The enzyme catalyses ADP(out) + phosphate(in) + H(+)(out) = ADP(in) + phosphate(out) + H(+)(in). It catalyses the reaction AMP(out) + phosphate(in) = AMP(in) + phosphate(out). It carries out the reaction phosphate(in) + ATP(out) + 2 H(+)(out) = phosphate(out) + ATP(in) + 2 H(+)(in). The catalysed reaction is dADP(in) + ADP(out) = dADP(out) + ADP(in). The enzyme catalyses Mg(2+)(in) + ADP(out) + ATP(in) + H(+)(out) = Mg(2+)(out) + ADP(in) + ATP(out) + H(+)(in). It catalyses the reaction ADP(out) + diphosphate(in) = ADP(in) + diphosphate(out). It carries out the reaction dAMP(in) + ADP(out) + H(+)(out) = dAMP(out) + ADP(in) + H(+)(in). The catalysed reaction is 3'-AMP(in) + ADP(out) + H(+)(out) = 3'-AMP(out) + ADP(in) + H(+)(in). The enzyme catalyses dAMP(out) + phosphate(in) = dAMP(in) + phosphate(out). It catalyses the reaction 3'-AMP(out) + phosphate(in) = 3'-AMP(in) + phosphate(out). It carries out the reaction dADP(out) + phosphate(in) + H(+)(out) = dADP(in) + phosphate(out) + H(+)(in). Its activity is regulated as follows. Activated by an increase in cytosolic calcium levels that induce a conformational change of the N-terminal regulatory domain, uncapping the channel and allowing transport. Inhibited by bathophenanthroline, mersalyl, p-hydroxymercuribenzoate, bromcresol purple and tannic acid. Its function is as follows. Electroneutral antiporter that mediates the transport of adenyl nucleotides through the inner mitochondrial membrane. Originally identified as an ATP-magnesium/inorganic phosphate antiporter, it also acts as a broad specificity adenyl nucleotide antiporter. By regulating the mitochondrial matrix adenyl nucleotide pool could adapt to changing cellular energetic demands and indirectly regulate adenyl nucleotide-dependent metabolic pathways. In vitro, a low activity is also observed with guanyl and pyrimidine nucleotides. May play a role in protecting cells against oxidative stress-induced cell death, by buffering calcium levels in the mitochondrial matrix through the formation of calcium-phosphate precipitates. In Mus musculus (Mouse), this protein is Mitochondrial adenyl nucleotide antiporter SLC25A24.